A 209-amino-acid chain; its full sequence is Regulator of G-protein signaling 1 (209 aa).

Residues 85–200 (SLEKLLANQT…LKSDIYLNLL (116 aa)) enclose the RGS domain.

Interacts with GNAI1 and GNAQ. Detected in peripheral blood monocytes. Expression is relatively low in B-cells and chronic lymphocytic leukemia B-cells; however, in other types of malignant B-cell such as non-Hodgkin lymphoma and hairy cell leukemia, expression is constitutively high.

It localises to the cell membrane. The protein localises to the cytoplasm. Its subcellular location is the cytosol. In terms of biological role, regulates G protein-coupled receptor signaling cascades, including signaling downstream of the N-formylpeptide chemoattractant receptors and leukotriene receptors. Inhibits B cell chemotaxis toward CXCL12. Inhibits signal transduction by increasing the GTPase activity of G protein alpha subunits thereby driving them into their inactive GDP-bound form. This chain is Regulator of G-protein signaling 1 (RGS1), found in Homo sapiens (Human).